The primary structure comprises 105 residues: Insulin (105 aa).

The signal sequence occupies residues Met-1 to Ala-22. Cystine bridges form between Cys-29–Cys-91, Cys-41–Cys-104, and Cys-90–Cys-95. Residues Asp-53–Val-82 constitute a propeptide, c peptide.

This sequence belongs to the insulin family. As to quaternary structure, heterodimer of a B chain and an A chain linked by two disulfide bonds.

Its subcellular location is the secreted. In terms of biological role, insulin decreases blood glucose concentration. It increases cell permeability to monosaccharides, amino acids and fatty acids. It accelerates glycolysis, the pentose phosphate cycle, and glycogen synthesis in liver. The sequence is that of Insulin (ins) from Oncorhynchus keta (Chum salmon).